We begin with the raw amino-acid sequence, 200 residues long: SKP1-like protein 19 (200 aa).

Residues 67 to 92 (DDVVETHESSTKGDKTVEEAKKKPDD) show a composition bias toward basic and acidic residues. Positions 67 to 109 (DDVVETHESSTKGDKTVEEAKKKPDDVAVPESTEGDDEAEDKK) are disordered. Positions 132-190 (ILAANYLNVQGLFDLCSKTIADYIKDMTPEEVRELFNIENDFTPEEEEAIRNENAWTFE) are interaction with the F-box domain of F-box proteins.

The protein belongs to the SKP1 family. As to quaternary structure, part of a SCF (SKP1-cullin-F-box) protein ligase complex. Interacts with CPR1/CPR30. In terms of tissue distribution, expressed in leaves and flowers.

Its subcellular location is the nucleus. It functions in the pathway protein modification; protein ubiquitination. In terms of biological role, involved in ubiquitination and subsequent proteasomal degradation of target proteins. Together with CUL1, RBX1 and a F-box protein, it forms a SCF E3 ubiquitin ligase complex. The functional specificity of this complex depends on the type of F-box protein. In the SCF complex, it serves as an adapter that links the F-box protein to CUL1. In Arabidopsis thaliana (Mouse-ear cress), this protein is SKP1-like protein 19 (ASK19).